Consider the following 96-residue polypeptide: Co-chaperonin GroES (96 aa).

Belongs to the GroES chaperonin family. In terms of assembly, heptamer of 7 subunits arranged in a ring. Interacts with the chaperonin GroEL.

It localises to the cytoplasm. Together with the chaperonin GroEL, plays an essential role in assisting protein folding. The GroEL-GroES system forms a nano-cage that allows encapsulation of the non-native substrate proteins and provides a physical environment optimized to promote and accelerate protein folding. GroES binds to the apical surface of the GroEL ring, thereby capping the opening of the GroEL channel. The sequence is that of Co-chaperonin GroES from Holospora obtusa.